The primary structure comprises 160 residues: Cytochrome b6-f complex subunit 4 (160 aa).

Transmembrane regions (helical) follow at residues 36 to 56, 95 to 115, and 131 to 151; these read LLYM…GLAV, LLGV…PFIE, and TVFL…TLPI.

The protein belongs to the cytochrome b family. PetD subfamily. As to quaternary structure, the 4 large subunits of the cytochrome b6-f complex are cytochrome b6, subunit IV (17 kDa polypeptide, petD), cytochrome f and the Rieske protein, while the 4 small subunits are petG, petL, petM and petN. The complex functions as a dimer.

The protein resides in the plastid. The protein localises to the chloroplast thylakoid membrane. Its function is as follows. Component of the cytochrome b6-f complex, which mediates electron transfer between photosystem II (PSII) and photosystem I (PSI), cyclic electron flow around PSI, and state transitions. This chain is Cytochrome b6-f complex subunit 4, found in Nephroselmis olivacea (Green alga).